Consider the following 228-residue polypeptide: Thiamine-phosphate synthase (228 aa).

Residues Gln-57–Lys-61 and Asn-89 contribute to the 4-amino-2-methyl-5-(diphosphooxymethyl)pyrimidine site. Mg(2+) is bound by residues Asp-90 and Asp-109. Residue Ser-128 participates in 4-amino-2-methyl-5-(diphosphooxymethyl)pyrimidine binding. Thr-154–Ser-156 is a binding site for 2-[(2R,5Z)-2-carboxy-4-methylthiazol-5(2H)-ylidene]ethyl phosphate. 4-amino-2-methyl-5-(diphosphooxymethyl)pyrimidine is bound at residue Lys-157. 2-[(2R,5Z)-2-carboxy-4-methylthiazol-5(2H)-ylidene]ethyl phosphate is bound by residues Gly-185 and Ile-205–Ser-206.

This sequence belongs to the thiamine-phosphate synthase family. The cofactor is Mg(2+).

It carries out the reaction 2-[(2R,5Z)-2-carboxy-4-methylthiazol-5(2H)-ylidene]ethyl phosphate + 4-amino-2-methyl-5-(diphosphooxymethyl)pyrimidine + 2 H(+) = thiamine phosphate + CO2 + diphosphate. The catalysed reaction is 2-(2-carboxy-4-methylthiazol-5-yl)ethyl phosphate + 4-amino-2-methyl-5-(diphosphooxymethyl)pyrimidine + 2 H(+) = thiamine phosphate + CO2 + diphosphate. The enzyme catalyses 4-methyl-5-(2-phosphooxyethyl)-thiazole + 4-amino-2-methyl-5-(diphosphooxymethyl)pyrimidine + H(+) = thiamine phosphate + diphosphate. Its pathway is cofactor biosynthesis; thiamine diphosphate biosynthesis; thiamine phosphate from 4-amino-2-methyl-5-diphosphomethylpyrimidine and 4-methyl-5-(2-phosphoethyl)-thiazole: step 1/1. Functionally, condenses 4-methyl-5-(beta-hydroxyethyl)thiazole monophosphate (THZ-P) and 2-methyl-4-amino-5-hydroxymethyl pyrimidine pyrophosphate (HMP-PP) to form thiamine monophosphate (TMP). The sequence is that of Thiamine-phosphate synthase from Roseiflexus castenholzii (strain DSM 13941 / HLO8).